The following is a 398-amino-acid chain: 1-deoxy-D-xylulose 5-phosphate reductoisomerase (398 aa).

5 residues coordinate NADPH: threonine 10, glycine 11, serine 12, isoleucine 13, and asparagine 124. Lysine 125 is a binding site for 1-deoxy-D-xylulose 5-phosphate. Residue glutamate 126 participates in NADPH binding. A Mn(2+)-binding site is contributed by aspartate 150. 4 residues coordinate 1-deoxy-D-xylulose 5-phosphate: serine 151, glutamate 152, serine 186, and histidine 209. Glutamate 152 contributes to the Mn(2+) binding site. Position 215 (glycine 215) interacts with NADPH. Positions 222, 227, 228, and 231 each coordinate 1-deoxy-D-xylulose 5-phosphate. Residue glutamate 231 coordinates Mn(2+).

It belongs to the DXR family. Requires Mg(2+) as cofactor. The cofactor is Mn(2+).

The enzyme catalyses 2-C-methyl-D-erythritol 4-phosphate + NADP(+) = 1-deoxy-D-xylulose 5-phosphate + NADPH + H(+). It functions in the pathway isoprenoid biosynthesis; isopentenyl diphosphate biosynthesis via DXP pathway; isopentenyl diphosphate from 1-deoxy-D-xylulose 5-phosphate: step 1/6. Catalyzes the NADPH-dependent rearrangement and reduction of 1-deoxy-D-xylulose-5-phosphate (DXP) to 2-C-methyl-D-erythritol 4-phosphate (MEP). The sequence is that of 1-deoxy-D-xylulose 5-phosphate reductoisomerase from Tolumonas auensis (strain DSM 9187 / NBRC 110442 / TA 4).